Consider the following 621-residue polypeptide: uncharacterized protein (621 aa).

Phosphoserine occurs at positions 269, 271, 274, 290, and 292. 6 LRR repeats span residues 333-354 (QLLYLRCSSCKLKSIPKNVFLS), 357-379 (SLVSLDLSGNELTEIPYALGELP), 380-401 (QLCSLNLASNKITGCRTFYHIS), 404-425 (HLQILVLSRNHLTSLSGLENVP), 426-447 (SLEKLDIRDNSITDVVEFRRLV), and 451-472 (NFEEAYLSLNPFTKTYSSYRIT). Residues 552–581 (SKNASGGDTSSNVSLLNGSASEEIPQNTES) form a disordered region.

The protein localises to the cytoplasm. It localises to the nucleus. It is found in the vacuole membrane. This is an uncharacterized protein from Schizosaccharomyces pombe (strain 972 / ATCC 24843) (Fission yeast).